The sequence spans 338 residues: MAAAAAGPVAAASRLFRSFSDALIEQDPQAALEELTKALEQKPDDAPYYCQRAYCHILLGNYSDAVADAKKSLELNPNSSTALLRKGICEYHEKNYAAALETFTEGQKLNSADADLTAWIKRCQEAQNGSQPEVSASQRTHQSKIKYDWYQTESQVIITLMIKNVQKNDVNVEFSEKELSALVKLPSGDDYSLKLRLLHPIIPEQSTFKVLSTKIEIKMKKPEAVRWEKLEGQGDVPNPKPFIADVKNLYPSSSHYTRNWDKLVGEIKEEEKNEKLEGDAALNKLFQQIYSDGSDEVKRAMNKSFMESGGTVLSTNWSDVGKRKVEINPPDDMEWKKY.

Ala2 is modified (N-acetylalanine). TPR repeat units follow at residues 11-45 (AASR…KPDD), 46-79 (APYY…NPNS), and 80-113 (STAL…NSAD). One can recognise a CS domain in the interval 142–231 (QSKIKYDWYQ…PEAVRWEKLE (90 aa)). Residues 249 to 338 (LYPSSSHYTR…PPDDMEWKKY (90 aa)) form the SGS domain. Ser254 is subject to Phosphoserine. Thr257 is modified (phosphothreonine). Residue Lys268 forms a Glycyl lysine isopeptide (Lys-Gly) (interchain with G-Cter in SUMO1); alternate linkage. Lys268 is covalently cross-linked (Glycyl lysine isopeptide (Lys-Gly) (interchain with G-Cter in SUMO2); alternate). Ser304 carries the post-translational modification Phosphoserine.

Belongs to the SGT1 family. As to quaternary structure, probably associates with SCF (SKP1-CUL1-F-box protein) complex through interaction with SKP1. Interacts with S100A6. Interacts with HSP90. Post-translationally, phosphorylated at Ser-254 and Ser-304, dephosphorylation promotes nuclear translocation, most likely due to disruption of the SUGT1-HSP90 complex.

It localises to the cytoplasm. The protein localises to the nucleus. Its function is as follows. May play a role in ubiquitination and subsequent proteasomal degradation of target proteins. The sequence is that of Protein SGT1 homolog from Bos taurus (Bovine).